The primary structure comprises 235 residues: MTHQKRLSVPKSWKVGRKGNKWISTTRPGPHSQARSLPLGLIIRDVLKLVDNNREGKRILSEGKVLVDGISRKDLRFPVGLFDVITLPLVNEAYRMLQDEKGRLVLYKLNETNVNKLCRINNKTTVKGGKIQLNLNDGTNILGSNDYGTKDSLILSIPDKHVVKHLKFEVGNLAMVIGGQHSGETGKIMEIREVKSSRHNTVMISGETDFETIEDYVIVIGEDKPEIRLGGEISE.

The S4 RNA-binding domain occupies 37-110; it reads LPLGLIIRDV…KGRLVLYKLN (74 aa).

It belongs to the eukaryotic ribosomal protein eS4 family.

The polypeptide is Small ribosomal subunit protein eS4 (Methanosarcina mazei (strain ATCC BAA-159 / DSM 3647 / Goe1 / Go1 / JCM 11833 / OCM 88) (Methanosarcina frisia)).